We begin with the raw amino-acid sequence, 419 residues long: UPF0229 protein TERTU_3150 (419 aa).

A disordered region spans residues 63-111 (IFHHGSGGKNNRVLPGNDRFNGGDHIERPEQGQGGGGNGSGASDSGEGE). Residues 83–92 (NGGDHIERPE) show a composition bias toward basic and acidic residues.

The protein belongs to the UPF0229 family.

The protein is UPF0229 protein TERTU_3150 of Teredinibacter turnerae (strain ATCC 39867 / T7901).